The primary structure comprises 526 residues: Meiotically up-regulated gene 99 protein, mitochondrial (526 aa).

A run of 2 helical transmembrane segments spans residues 398 to 418 (TLYT…LYFV) and 421 to 441 (FSLY…LYYL).

The protein resides in the mitochondrion membrane. In terms of biological role, required for correct meiotic chromosome segregation. Appears to also have role in sporulation. This Schizosaccharomyces pombe (strain 972 / ATCC 24843) (Fission yeast) protein is Meiotically up-regulated gene 99 protein, mitochondrial (mug99).